We begin with the raw amino-acid sequence, 390 residues long: SSTETPPSYNQLNYNENLLRFFNSKPVTAPVELDPPKVESSYVSSARGEDARSTLSPVQGFEGSGGSGSSGNFTTGSNLHMSSVTNTSNAGTGTSGTGNSGDGGGGGGADGTGSGAAPPVTLTESLLNKHNDEMEKFMLKKHRESRGRSGEKNKKSANEAMKMLEYSGPGPGHGHGIKRGGSHSWEGEANKPKQQLTLNPSGGGGGMPLLLDITHTSSSTQNKGLAGVGVGGAGGGVGGGGSGTGLGGNGNVGSGNGNNNQASTNQYTQSGLPCTQNINLWPPFSVGITTPTSVLSSHTAVAQSSFSPQHSLFPTFYYIPASIAASSPSGTNPSPNRPHKHAHVHSSSEKPSTSQAAAATMPLQYMTGVMYPHPSLFYTHPAAAAATAMV.

Disordered regions lie at residues 27–120 (VTAP…APPV), 164–188 (LEYSGPGPGHGHGIKRGGSHSWEGE), 247–266 (GGNGNVGSGNGNNNQASTNQ), and 327–356 (SPSGTNPSPNRPHKHAHVHSSSEKPSTSQA). Residues 93 to 114 (GTSGTGNSGDGGGGGGADGTGS) show a composition bias toward gly residues. Positions 247 to 256 (GGNGNVGSGN) are enriched in gly residues.

Forms a heterodimer with timeless (TIM); the complex then translocates into the nucleus. Post-translationally, phosphorylated with a circadian rhythmicity, probably by the double-time protein (dbt). Phosphorylation could be implicated in the stability of per monomer and in the formation of heterodimer per-tim.

It is found in the nucleus. The protein resides in the cytoplasm. The protein localises to the perinuclear region. In terms of biological role, essential for biological clock functions. Determines the period length of circadian and ultradian rhythms; an increase in PER dosage leads to shortened circadian rhythms and a decrease leads to lengthened circadian rhythms. Essential for the circadian rhythmicity of locomotor activity, eclosion behavior, and for the rhythmic component of the male courtship song that originates in the thoracic nervous system. The biological cycle depends on the rhythmic formation and nuclear localization of the TIM-PER complex. Light induces the degradation of TIM, which promotes elimination of PER. Nuclear activity of the heterodimer coordinatively regulates PER and TIM transcription through a negative feedback loop. Behaves as a negative element in circadian transcriptional loop. Does not appear to bind DNA, suggesting indirect transcriptional inhibition. The protein is Period circadian protein (per) of Drosophila tropicalis (Fruit fly).